The following is a 557-amino-acid chain: Syntaxin-binding protein 4 (557 aa).

A phosphoserine mark is found at Ser10 and Ser12. The region spanning 19-105 is the PDZ domain; it reads AFRVITVTKE…RSESPWEIAF (87 aa). Ser99 bears the Phosphoserine; by PKB/AKT2 mark. The span at 142–154 shows a compositional bias: low complexity; sequence PSETLLPKTSSTP. The interval 142–214 is disordered; the sequence is PSETLLPKTS…SGPQGKISLN (73 aa). The span at 179–194 shows a compositional bias: polar residues; sequence SPITSLDNSPADTSNA. Phosphoserine is present on Ser216. Positions 298–408 form a coiled coil; the sequence is ADEVGKLRQE…NKESVQDLRK (111 aa). Position 467 is a phosphoserine (Ser467). The WW domain maps to 500 to 533; that stretch reads DCLPYGWEEAYTADGIKYFINHVTQTTSWIHPVM.

In terms of assembly, interacts with STX4A. In terms of processing, phosphorylated on Ser-99 by PKB/AKT2 after insulin treatment. Phosphorylation on Ser-99 abolishes the interaction with STX4A. Detected in skeletal muscle, heart, testis, adipocytes and pancreatic islet cells.

Its subcellular location is the cytoplasm. Its function is as follows. Plays a role in the translocation of transport vesicles from the cytoplasm to the plasma membrane. Inhibits the translocation of SLC2A4 from intracellular vesicles to the plasma membrane by STX4A binding and preventing the interaction between STX4A and VAMP2. Stimulation with insulin disrupts the interaction with STX4A, leading to increased levels of SLC2A4 at the plasma membrane. May also play a role in the regulation of insulin release by pancreatic beta cells after stimulation by glucose. The protein is Syntaxin-binding protein 4 (Stxbp4) of Mus musculus (Mouse).